The following is a 258-amino-acid chain: Cytolethal distending toxin subunit A (258 aa).

The first 21 residues, 1 to 21, serve as a signal peptide directing secretion; sequence MANKRTPIFIAGILIPILLNG. Residue Cys-22 is the site of N-palmitoyl cysteine attachment. A lipid anchor (S-diacylglycerol cysteine) is attached at Cys-22. Positions 40–71 are disordered; sequence VEGGPTVPSPDEPGLPLPGPGPALPTNGAIPI. Over residues 46 to 62 the composition is skewed to pro residues; that stretch reads VPSPDEPGLPLPGPGPA. The interval 93–104 is mediates binding to target cells; sequence WSRGAGSSLWAY. A Ricin B-type lectin domain is found at 125–223; that stretch reads RPNTIQFRNV…EKNFEFMWSI (99 aa). The disordered stretch occupies residues 236–258; that stretch reads KPEIRPFPPQPIEPDEHSTGGEQ. Basic and acidic residues predominate over residues 249 to 258; sequence PDEHSTGGEQ.

As to quaternary structure, heterotrimer of 3 subunits, CdtA, CdtB and CdtC.

It localises to the cell outer membrane. Functionally, CDTs are cytotoxins which induce host cell distension, growth arrest in G2/M phase, nucleus swelling, and chromatin fragmentation in HeLa cells. CdtA, along with CdtC, probably forms a heterodimeric subunit required for the delivery of CdtB. This is Cytolethal distending toxin subunit A (cdtA) from Escherichia coli.